We begin with the raw amino-acid sequence, 515 residues long: Galactose/methyl galactoside import ATP-binding protein MglA (515 aa).

ABC transporter domains are found at residues 8–243 (LEMR…VGRE) and 254–499 (IPKE…AKYL). 40-47 (GENGAGKS) is a binding site for ATP.

It belongs to the ABC transporter superfamily. Galactose/methyl galactoside importer (TC 3.A.1.2.3) family. As to quaternary structure, the complex is composed of one ATP-binding protein (MglA), two transmembrane proteins (MglC) and a solute-binding protein (MglB).

It is found in the cell membrane. It catalyses the reaction D-galactose(out) + ATP + H2O = D-galactose(in) + ADP + phosphate + H(+). The enzyme catalyses methyl beta-D-galactoside(out) + ATP + H2O = methyl beta-D-galactoside(in) + ADP + phosphate + H(+). In terms of biological role, part of the ABC transporter complex MglABC involved in galactose/methyl galactoside import. Responsible for energy coupling to the transport system. In Clostridium perfringens (strain ATCC 13124 / DSM 756 / JCM 1290 / NCIMB 6125 / NCTC 8237 / Type A), this protein is Galactose/methyl galactoside import ATP-binding protein MglA.